A 75-amino-acid polypeptide reads, in one-letter code: MGSVLAEVAGSLASIGYGLAAIGSAIGVGIVVGKTVESVARQPELAKRLTVLMYVGVAFTEALALIGIGTYFLFR.

Transmembrane regions (helical) follow at residues 12 to 32 and 49 to 69; these read LASI…GIVV and LTVL…IGIG.

The protein belongs to the ATPase C chain family. F-type ATPases have 2 components, F(1) - the catalytic core - and F(0) - the membrane proton channel. F(1) has five subunits: alpha(3), beta(3), gamma(1), delta(1), epsilon(1). F(0) has three main subunits: a(1), b(2) and c(10-14). The alpha and beta chains form an alternating ring which encloses part of the gamma chain. F(1) is attached to F(0) by a central stalk formed by the gamma and epsilon chains, while a peripheral stalk is formed by the delta and b chains.

Its subcellular location is the cell membrane. F(1)F(0) ATP synthase produces ATP from ADP in the presence of a proton or sodium gradient. F-type ATPases consist of two structural domains, F(1) containing the extramembraneous catalytic core and F(0) containing the membrane proton channel, linked together by a central stalk and a peripheral stalk. During catalysis, ATP synthesis in the catalytic domain of F(1) is coupled via a rotary mechanism of the central stalk subunits to proton translocation. Functionally, key component of the F(0) channel; it plays a direct role in translocation across the membrane. A homomeric c-ring of between 10-14 subunits forms the central stalk rotor element with the F(1) delta and epsilon subunits. The polypeptide is ATP synthase subunit c (Tropheryma whipplei (strain TW08/27) (Whipple's bacillus)).